The following is a 149-amino-acid chain: uncharacterized protein (149 aa).

Transmembrane regions (helical) follow at residues 91–111 and 122–142; these read IFILLCLLICLGLALMGLFHY and ISILFWSGSAFLIIVLIICLL.

Its subcellular location is the membrane. This is an uncharacterized protein from Dictyostelium discoideum (Social amoeba).